The chain runs to 237 residues: MSRPSRVLGLPLLSLGLTLLVSTPLQAQEAQTFRAVKQDLVKLYQSHPSTFYCGCNIKFSGKKMAPDWESCGYLPRKQANRAARIEWEHVVPAWEFGHQLQCWQEGGRKNCGKSAEFNKMEGDMHNLFPAIGEVNGDRANYRFSDWNGKPNQYGKCQMLVDFKEQRVQPPKGPVRGQIARAYLYMGEQYGLRLAAQQRKLFEAWDRQYPADRWECERNRRIGKLQGNTNPFIEKQCQ.

The first 27 residues, 1 to 27 (MSRPSRVLGLPLLSLGLTLLVSTPLQA), serve as a signal peptide directing secretion.

Belongs to the EndA/NucM nuclease family.

Its subcellular location is the periplasm. Endonuclease which is capable of degrading plasmid DNA. This is Periplasmic deoxyribonuclease (dnsH) from Aeromonas hydrophila.